Consider the following 677-residue polypeptide: Methionine--tRNA ligase (677 aa).

The 'HIGH' region motif lies at 15-25 (PYANGSIHLGH). Residues cysteine 146, cysteine 149, cysteine 159, and cysteine 162 each contribute to the Zn(2+) site. Residues 333 to 337 (KMSKS) carry the 'KMSKS' region motif. Lysine 336 lines the ATP pocket. The region spanning 575–677 (DFAKVDLRVA…AGAKPGHQVK (103 aa)) is the tRNA-binding domain.

This sequence belongs to the class-I aminoacyl-tRNA synthetase family. MetG type 1 subfamily. As to quaternary structure, homodimer. Zn(2+) serves as cofactor.

The protein resides in the cytoplasm. It carries out the reaction tRNA(Met) + L-methionine + ATP = L-methionyl-tRNA(Met) + AMP + diphosphate. Is required not only for elongation of protein synthesis but also for the initiation of all mRNA translation through initiator tRNA(fMet) aminoacylation. The protein is Methionine--tRNA ligase of Shigella sonnei (strain Ss046).